Reading from the N-terminus, the 332-residue chain is dTDP-3,4-didehydro-2,6-dideoxy-alpha-D-glucose 3-reductase (332 aa).

Residue 17–23 coordinates NADP(+); that stretch reads CADIAWR. R24 is a binding site for substrate. Residues 42–43, Y63, L79, and H84 each bind NADP(+); that span reads SR. Residue K102 is the Proton donor of the active site. 2 residues coordinate NADP(+): R170 and D182. Residues Y240 and T260 each contribute to the substrate site.

It belongs to the Gfo/Idh/MocA family. In terms of assembly, homotetramer; dimer of dimers.

The enzyme catalyses dTDP-4-dehydro-2,6-dideoxy-alpha-D-glucose + NADP(+) = dTDP-3,4-didehydro-2,6-dideoxy-alpha-D-glucose + NADPH + H(+). The protein operates within antibiotic biosynthesis. Its function is as follows. Involved in the biosynthesis of L-digitoxose, an unusual dideoxysugar attached to various pharmacologically active natural products, including the antitumor antibiotic tetrocarcin A, and the antibiotics kijanimicin and jadomycin B. Catalyzes the reduction of the C-3 keto moiety of dTDP-3,4-diketo-2,6-dideoxy-alpha-D-glucose to yield dTDP-4-keto-2,6-dideoxy-alpha-D-glucose. Also able to reduce dTDP-3-keto-6-deoxy-D-galactose and dTDP-3-keto-6-deoxy-D-glucose to yield dTDP-fucose and dTDP-quinovose, respectively. In Actinomadura kijaniata, this protein is dTDP-3,4-didehydro-2,6-dideoxy-alpha-D-glucose 3-reductase.